The following is a 323-amino-acid chain: tRNA(Ile)-lysidine synthase (323 aa).

Residue 33 to 38 coordinates ATP; it reads SGGSDS.

The protein belongs to the tRNA(Ile)-lysidine synthase family.

The protein localises to the cytoplasm. The catalysed reaction is cytidine(34) in tRNA(Ile2) + L-lysine + ATP = lysidine(34) in tRNA(Ile2) + AMP + diphosphate + H(+). In terms of biological role, ligates lysine onto the cytidine present at position 34 of the AUA codon-specific tRNA(Ile) that contains the anticodon CAU, in an ATP-dependent manner. Cytidine is converted to lysidine, thus changing the amino acid specificity of the tRNA from methionine to isoleucine. The polypeptide is tRNA(Ile)-lysidine synthase (Mycobacterium leprae (strain TN)).